The chain runs to 461 residues: Vitamin K-dependent protein C (461 aa).

The first 18 residues, 1-18, serve as a signal peptide directing secretion; it reads MWQLTSLLLFVATWGISG. O-linked (GalNAc...) threonine glycosylation occurs at Thr-19. The propeptide occupies 19–42; sequence TPAPLDSVFSSSERAHQVLRIRKR. Positions 43-88 constitute a Gla domain; the sequence is ANSFLEELRHSSLERECIEEICDFEEAKEIFQNVDDTLAFWSKHVD. Glu-48, Glu-49, Glu-56, Glu-58, Glu-61, Glu-62, Glu-67, Glu-68, and Glu-71 each carry 4-carboxyglutamate. A disulfide bridge links Cys-59 with Cys-64. 4 disulfides stabilise this stretch: Cys-92-Cys-111, Cys-101-Cys-106, Cys-105-Cys-120, and Cys-122-Cys-131. 2 consecutive EGF-like domains span residues 97-132 and 136-176; these read LEHP…RFCQ and SFLN…LQCH. Asp-113 bears the (3R)-3-hydroxyaspartate mark. The N-linked (GlcNAc...) asparagine glycan is linked to Asn-139. Intrachain disulfides connect Cys-140–Cys-151, Cys-147–Cys-160, Cys-162–Cys-175, Cys-183–Cys-319, and Cys-238–Cys-254. The Peptidase S1 domain maps to 212-450; sequence LIDGKMTRRG…YLDWIHGHIR (239 aa). The active-site Charge relay system is the His-253. Asn-290 carries an N-linked (GlcNAc...) asparagine glycan. Asp-299 (charge relay system) is an active-site residue. Ser-347 carries the phosphoserine; by FAM20C modification. The N-linked (GlcNAc...) asparagine glycan is linked to Asn-355. Residue Asn-371 is glycosylated (N-linked (GlcNAc...) asparagine; atypical; partial). 2 disulfide bridges follow: Cys-373-Cys-387 and Cys-398-Cys-426. The Charge relay system role is filled by Ser-402.

This sequence belongs to the peptidase S1 family. As to quaternary structure, synthesized as a single chain precursor, which is cleaved into a light chain and a heavy chain held together by a disulfide bond. The enzyme is then activated by thrombin, which cleaves a tetradecapeptide from the amino end of the heavy chain; this reaction, which occurs at the surface of endothelial cells, is strongly promoted by thrombomodulin. Interacts (activated) with iripin-8, a serine protease inhibitor from Ixodes ricinus saliva. The vitamin K-dependent, enzymatic carboxylation of some Glu residues allows the modified protein to bind calcium. Post-translationally, N- and O-glycosylated. Partial (70%) N-glycosylation of Asn-371 with an atypical N-X-C site produces a higher molecular weight form referred to as alpha. The lower molecular weight form, not N-glycosylated at Asn-371, is beta. O-glycosylated with core 1 or possibly core 8 glycans. In terms of processing, the iron and 2-oxoglutarate dependent 3-hydroxylation of aspartate and asparagine is (R) stereospecific within EGF domains. May be phosphorylated on a Ser or Thr in a region (AA 25-30) of the propeptide. Plasma; synthesized in the liver.

It localises to the secreted. Its subcellular location is the golgi apparatus. It is found in the endoplasmic reticulum. The catalysed reaction is Degradation of blood coagulation factors Va and VIIIa.. Functionally, protein C is a vitamin K-dependent serine protease that regulates blood coagulation by inactivating factors Va and VIIIa in the presence of calcium ions and phospholipids. Exerts a protective effect on the endothelial cell barrier function. This Homo sapiens (Human) protein is Vitamin K-dependent protein C (PROC).